Reading from the N-terminus, the 406-residue chain is UPF0754 membrane protein CYB_2931 (406 aa).

2 helical membrane passes run 1 to 21 (MAFW…YFTN) and 385 to 405 (IVNL…LFLL).

The protein belongs to the UPF0754 family.

The protein resides in the cell inner membrane. The polypeptide is UPF0754 membrane protein CYB_2931 (Synechococcus sp. (strain JA-2-3B'a(2-13)) (Cyanobacteria bacterium Yellowstone B-Prime)).